The following is a 292-amino-acid chain: Protease HtpX (292 aa).

2 helical membrane passes run 5–25 and 34–54; these read IFLF…VMSV and SGLL…SLLL. Residue H140 coordinates Zn(2+). E141 is a catalytic residue. A Zn(2+)-binding site is contributed by H144. Transmembrane regions (helical) follow at residues 155 to 175 and 193 to 213; these read LLQG…GGII and IIVF…AMWF. E218 contributes to the Zn(2+) binding site.

Belongs to the peptidase M48B family. Zn(2+) serves as cofactor.

The protein resides in the cell inner membrane. This Xanthomonas oryzae pv. oryzae (strain MAFF 311018) protein is Protease HtpX.